The primary structure comprises 977 residues: DNA-directed RNA polymerase 3B, chloroplastic (977 aa).

The transit peptide at 1 to 71 (MASTASYSPS…NNIQSQTTVC (71 aa)) directs the protein to the chloroplast. Active-site residues include aspartate 678, lysine 753, and aspartate 910.

The protein belongs to the phage and mitochondrial RNA polymerase family.

It is found in the plastid. Its subcellular location is the chloroplast. The enzyme catalyses RNA(n) + a ribonucleoside 5'-triphosphate = RNA(n+1) + diphosphate. Functionally, DNA-dependent RNA polymerase catalyzes the transcription of DNA into RNA using the four ribonucleoside triphosphates as substrates. In Nicotiana tabacum (Common tobacco), this protein is DNA-directed RNA polymerase 3B, chloroplastic (RPOT3-TOM).